The following is a 563-amino-acid chain: Calnexin homolog (563 aa).

Residues 1–23 form the signal peptide; the sequence is MRFNAAITGALVSSATLMGQAHA. The Lumenal portion of the chain corresponds to 24 to 493; sequence EETEKKADAT…PINAVKQVPE (470 aa). Ca(2+) is bound at residue Asp-98. A disulfide bridge links Cys-141 with Cys-175. The an alpha-D-glucoside site is built by Tyr-145, Lys-147, Tyr-166, and Asp-173. Asn-236 carries N-linked (GlcNAc...) asparagine glycosylation. The interval 241-323 is disordered; it reads EDFAPPVNPE…EKPEDWDDEE (83 aa). Basic and acidic residues predominate over residues 249–279; it reads PEKEIDDPKDKKPADWVDEAKIPDPEAKKPD. Residues 253–386 are p domain (Extended arm); that stretch reads IDDPKDKKPA…RKIPNPAYFE (134 aa). The segment covering 280–305 has biased composition (acidic residues); the sequence is DWDEDAPYEIVDEEATMPEDWLEDEP. A disulfide bond links Cys-337 and Cys-343. Glu-402 provides a ligand contact to an alpha-D-glucoside. Asp-413 is a Ca(2+) binding site. A helical transmembrane segment spans residues 494 to 514; sequence VAGGLGALLLTMILVIVGAVG. Residues 515-563 lie on the Cytoplasmic side of the membrane; the sequence is ASSPAPAAAAKKGKEAASAAKEKASEAVSSAADTAKGAATKRNTRSSAQ. The interval 521 to 563 is disordered; that stretch reads AAAAKKGKEAASAAKEKASEAVSSAADTAKGAATKRNTRSSAQ. Over residues 526–539 the composition is skewed to basic and acidic residues; it reads KGKEAASAAKEKAS.

This sequence belongs to the calreticulin family.

It localises to the endoplasmic reticulum membrane. Its function is as follows. Interacts with newly synthesized monoglucosylated glycoproteins in the endoplasmic reticulum. It may act in assisting protein assembly and/or in the retention within the ER of unassembled protein subunits. It seems to play a major role in the quality control apparatus of the ER by the retention of incorrectly folded proteins. This is Calnexin homolog from Aspergillus fumigatus (strain ATCC MYA-4609 / CBS 101355 / FGSC A1100 / Af293) (Neosartorya fumigata).